Here is a 346-residue protein sequence, read N- to C-terminus: Fe(3+) ions import ATP-binding protein FbpC 2 (346 aa).

Residues Leu5–Ile235 form the ABC transporter domain. Gly37–Thr44 is an ATP binding site.

It belongs to the ABC transporter superfamily. Fe(3+) ion importer (TC 3.A.1.10) family. As to quaternary structure, the complex is composed of two ATP-binding proteins (FbpC), two transmembrane proteins (FbpB) and a solute-binding protein (FbpA).

The protein resides in the cell membrane. The catalysed reaction is Fe(3+)(out) + ATP + H2O = Fe(3+)(in) + ADP + phosphate + H(+). Part of the ABC transporter complex FbpABC involved in Fe(3+) ions import. Responsible for energy coupling to the transport system. This Rhodococcus jostii (strain RHA1) protein is Fe(3+) ions import ATP-binding protein FbpC 2.